Reading from the N-terminus, the 512-residue chain is Centrosomal protein CCDC61 (512 aa).

An N-acetylmethionine modification is found at methionine 1. Positions 1-142 (MEQPAGLQVD…PLPLPYQGKP (142 aa)) are head domain. Coiled-coil stretches lie at residues 176-203 (WHLR…REEA) and 246-273 (RRLA…NCEL). Position 282 is a phosphothreonine (threonine 282). 2 disordered regions span residues 282 to 415 (TLPA…SFRS) and 430 to 472 (SQSV…HLAS). Positions 287-300 (AREDRALSSRERST) are enriched in basic and acidic residues. A phosphoserine mark is found at serine 328, serine 330, serine 372, and serine 375. Positions 406–415 (RSSSVDSFRS) are enriched in low complexity. Serine 447 and serine 473 each carry phosphoserine.

It belongs to the CCDC61 family. Forms homodimers (via head domain). Interacts with CEP170. Interacts with PCM1 and CEP131. Binds tubulin.

It localises to the cytoplasm. The protein localises to the cytoskeleton. The protein resides in the microtubule organizing center. Its subcellular location is the centrosome. It is found in the centriolar satellite. It localises to the cilium basal body. In terms of biological role, microtubule-binding centrosomal protein required for centriole cohesion, independently of the centrosome-associated protein/CEP250 and rootletin/CROCC linker. In interphase, required for anchoring microtubule at the mother centriole subdistal appendages and for centrosome positioning. During mitosis, may be involved in spindle assembly and chromatin alignment by regulating the organization of spindle microtubules into a symmetrical structure. Plays a non-essential role in ciliogenesis. This is Centrosomal protein CCDC61 from Rattus norvegicus (Rat).